The chain runs to 291 residues: Porphobilinogen deaminase (291 aa).

S-(dipyrrolylmethanemethyl)cysteine is present on C238.

This sequence belongs to the HMBS family. In terms of assembly, monomer. It depends on dipyrromethane as a cofactor.

It catalyses the reaction 4 porphobilinogen + H2O = hydroxymethylbilane + 4 NH4(+). It participates in porphyrin-containing compound metabolism; protoporphyrin-IX biosynthesis; coproporphyrinogen-III from 5-aminolevulinate: step 2/4. Its function is as follows. Tetrapolymerization of the monopyrrole PBG into the hydroxymethylbilane pre-uroporphyrinogen in several discrete steps. This chain is Porphobilinogen deaminase, found in Clostridium beijerinckii (strain ATCC 51743 / NCIMB 8052) (Clostridium acetobutylicum).